A 227-amino-acid polypeptide reads, in one-letter code: Cytochrome c oxidase subunit 2 (227 aa).

The Mitochondrial intermembrane segment spans residues 1–14 (MAYPFQLGLQDATS). A helical membrane pass occupies residues 15–45 (PIMEELTNFHDHTLMIVFLISSLVLYIISLM). Residues 46–59 (LTTKLTHTSTMDAQ) are Mitochondrial matrix-facing. The helical transmembrane segment at 60-87 (EVETIWTILPAVILILIALPSLRILYMM) threads the bilayer. Over 88–227 (DEINNPVLTV…YFENWSASMI (140 aa)) the chain is Mitochondrial intermembrane. 6 residues coordinate Cu cation: His-161, Cys-196, Glu-198, Cys-200, His-204, and Met-207. Glu-198 lines the Mg(2+) pocket. Tyr-218 carries the phosphotyrosine modification.

Belongs to the cytochrome c oxidase subunit 2 family. As to quaternary structure, component of the cytochrome c oxidase (complex IV, CIV), a multisubunit enzyme composed of 14 subunits. The complex is composed of a catalytic core of 3 subunits MT-CO1, MT-CO2 and MT-CO3, encoded in the mitochondrial DNA, and 11 supernumerary subunits COX4I, COX5A, COX5B, COX6A, COX6B, COX6C, COX7A, COX7B, COX7C, COX8 and NDUFA4, which are encoded in the nuclear genome. The complex exists as a monomer or a dimer and forms supercomplexes (SCs) in the inner mitochondrial membrane with NADH-ubiquinone oxidoreductase (complex I, CI) and ubiquinol-cytochrome c oxidoreductase (cytochrome b-c1 complex, complex III, CIII), resulting in different assemblies (supercomplex SCI(1)III(2)IV(1) and megacomplex MCI(2)III(2)IV(2)). Found in a complex with TMEM177, COA6, COX18, COX20, SCO1 and SCO2. Interacts with TMEM177 in a COX20-dependent manner. Interacts with COX20. Interacts with COX16. Cu cation is required as a cofactor.

Its subcellular location is the mitochondrion inner membrane. It carries out the reaction 4 Fe(II)-[cytochrome c] + O2 + 8 H(+)(in) = 4 Fe(III)-[cytochrome c] + 2 H2O + 4 H(+)(out). Functionally, component of the cytochrome c oxidase, the last enzyme in the mitochondrial electron transport chain which drives oxidative phosphorylation. The respiratory chain contains 3 multisubunit complexes succinate dehydrogenase (complex II, CII), ubiquinol-cytochrome c oxidoreductase (cytochrome b-c1 complex, complex III, CIII) and cytochrome c oxidase (complex IV, CIV), that cooperate to transfer electrons derived from NADH and succinate to molecular oxygen, creating an electrochemical gradient over the inner membrane that drives transmembrane transport and the ATP synthase. Cytochrome c oxidase is the component of the respiratory chain that catalyzes the reduction of oxygen to water. Electrons originating from reduced cytochrome c in the intermembrane space (IMS) are transferred via the dinuclear copper A center (CU(A)) of subunit 2 and heme A of subunit 1 to the active site in subunit 1, a binuclear center (BNC) formed by heme A3 and copper B (CU(B)). The BNC reduces molecular oxygen to 2 water molecules using 4 electrons from cytochrome c in the IMS and 4 protons from the mitochondrial matrix. The protein is Cytochrome c oxidase subunit 2 of Rattus norvegicus (Rat).